We begin with the raw amino-acid sequence, 60 residues long: UPF0434 protein Aave_2563 (60 aa).

This sequence belongs to the UPF0434 family.

The chain is UPF0434 protein Aave_2563 from Paracidovorax citrulli (strain AAC00-1) (Acidovorax citrulli).